The chain runs to 170 residues: 4-hydroxyphenylacetate 3-monooxygenase reductase component (170 aa).

It belongs to the non-flavoprotein flavin reductase family. HpaC subfamily. As to quaternary structure, homodimer. 4-HPA 3-monooxygenase consists of a reductase component HpaC and an oxygenase component HpaB.

It catalyses the reaction a reduced flavin + NAD(+) = an oxidized flavin + NADH + 2 H(+). It functions in the pathway aromatic compound metabolism; 4-hydroxyphenylacetate degradation; pyruvate and succinate semialdehyde from 4-hydroxyphenylacetate: step 1/7. In terms of biological role, catalyzes the reduction of free flavins (FMN, FAD and riboflavin) by NADH. Subsequently, the reduced flavins diffuse to the large HpaB component or to other electron acceptors such as cytochrome c and Fe(3+) ion. The polypeptide is 4-hydroxyphenylacetate 3-monooxygenase reductase component (hpaC) (Salmonella typhimurium (strain LT2 / SGSC1412 / ATCC 700720)).